The following is a 92-amino-acid chain: Pyrimidine/purine nucleoside phosphorylase (92 aa).

It belongs to the nucleoside phosphorylase PpnP family.

It catalyses the reaction a purine D-ribonucleoside + phosphate = a purine nucleobase + alpha-D-ribose 1-phosphate. The catalysed reaction is adenosine + phosphate = alpha-D-ribose 1-phosphate + adenine. The enzyme catalyses cytidine + phosphate = cytosine + alpha-D-ribose 1-phosphate. It carries out the reaction guanosine + phosphate = alpha-D-ribose 1-phosphate + guanine. It catalyses the reaction inosine + phosphate = alpha-D-ribose 1-phosphate + hypoxanthine. The catalysed reaction is thymidine + phosphate = 2-deoxy-alpha-D-ribose 1-phosphate + thymine. The enzyme catalyses uridine + phosphate = alpha-D-ribose 1-phosphate + uracil. It carries out the reaction xanthosine + phosphate = alpha-D-ribose 1-phosphate + xanthine. In terms of biological role, catalyzes the phosphorolysis of diverse nucleosides, yielding D-ribose 1-phosphate and the respective free bases. Can use uridine, adenosine, guanosine, cytidine, thymidine, inosine and xanthosine as substrates. Also catalyzes the reverse reactions. The chain is Pyrimidine/purine nucleoside phosphorylase from Rhodopirellula baltica (strain DSM 10527 / NCIMB 13988 / SH1).